We begin with the raw amino-acid sequence, 85 residues long: UPF0386 protein Arad_1912 (85 aa).

Belongs to the UPF0386 family.

This Rhizobium rhizogenes (strain K84 / ATCC BAA-868) (Agrobacterium radiobacter) protein is UPF0386 protein Arad_1912.